A 478-amino-acid polypeptide reads, in one-letter code: ATP synthase subunit beta (478 aa).

151–158 (GGAGVGKT) provides a ligand contact to ATP.

This sequence belongs to the ATPase alpha/beta chains family. As to quaternary structure, F-type ATPases have 2 components, CF(1) - the catalytic core - and CF(0) - the membrane proton channel. CF(1) has five subunits: alpha(3), beta(3), gamma(1), delta(1), epsilon(1). CF(0) has three main subunits: a(1), b(2) and c(9-12). The alpha and beta chains form an alternating ring which encloses part of the gamma chain. CF(1) is attached to CF(0) by a central stalk formed by the gamma and epsilon chains, while a peripheral stalk is formed by the delta and b chains.

Its subcellular location is the cell inner membrane. The enzyme catalyses ATP + H2O + 4 H(+)(in) = ADP + phosphate + 5 H(+)(out). Functionally, produces ATP from ADP in the presence of a proton gradient across the membrane. The catalytic sites are hosted primarily by the beta subunits. In Azorhizobium caulinodans (strain ATCC 43989 / DSM 5975 / JCM 20966 / LMG 6465 / NBRC 14845 / NCIMB 13405 / ORS 571), this protein is ATP synthase subunit beta.